The following is a 78-amino-acid chain: Large ribosomal subunit protein bL28 (78 aa).

A disordered region spans residues 1 to 20 (MSQVCQVTGKRPVVGNNRSH).

The protein belongs to the bacterial ribosomal protein bL28 family.

This is Large ribosomal subunit protein bL28 from Idiomarina loihiensis (strain ATCC BAA-735 / DSM 15497 / L2-TR).